A 102-amino-acid polypeptide reads, in one-letter code: Virulence-associated protein A (102 aa).

In terms of domain architecture, HTH cro/C1-type spans Leu14 to Phe69. Residues Asn25–Val44 constitute a DNA-binding region (H-T-H motif).

It belongs to the VapA/VapI family.

The protein is Virulence-associated protein A (vapA) of Dichelobacter nodosus (Bacteroides nodosus).